Here is a 140-residue protein sequence, read N- to C-terminus: ATP synthase epsilon chain (140 aa).

It belongs to the ATPase epsilon chain family. F-type ATPases have 2 components, CF(1) - the catalytic core - and CF(0) - the membrane proton channel. CF(1) has five subunits: alpha(3), beta(3), gamma(1), delta(1), epsilon(1). CF(0) has three main subunits: a, b and c.

The protein localises to the cell inner membrane. Produces ATP from ADP in the presence of a proton gradient across the membrane. The protein is ATP synthase epsilon chain (atpC) of Vibrio alginolyticus.